The sequence spans 513 residues: MQLNSTEISELIKKRIAQFDVVSEARNTGTIVSVSDGIIRIHGLSDVMQGEMIALPGNRYAMALNLERDSVGAVVMGPYADLAEGMEVQCTGRILEVPVGRGLLGRVVNTLGQPIDGKGEIENDGFSPVEVIAPGVIDRRSVDQPVQTGYKAVDSMVPIGRGQRELIIGDRQTGKTALAIDAIINQRNSGIKCIYVAIGQKASTIANVVRKLEEHGALANTIVVAASASESAALQYLAPYAGCAMGEYFRDRGEDALIVYDDLSKQAVAYRQISLLLRRPPGREAYPGDVFYLHSRLLERASRVNEDYVEKFTKGEVKGKTGSLTALPIIETQAGDVSAFVPTNVISITDGQIFLESNLFNSGIRPAVNPGISVSRVGGSAQTKVIKKLAGGIRTALAQYRELAAFAQFASDLDDATRKQLSHGEKVTELLKQKQFTPLSVAEQAVILFAVEFGYLDDVELSKIASFETALLDYSNRNHAEFMQELNKTGNYNDEIKDTLKSILDGFKANSAW.

ATP is bound at residue 169-176 (GDRQTGKT).

It belongs to the ATPase alpha/beta chains family. As to quaternary structure, F-type ATPases have 2 components, CF(1) - the catalytic core - and CF(0) - the membrane proton channel. CF(1) has five subunits: alpha(3), beta(3), gamma(1), delta(1), epsilon(1). CF(0) has three main subunits: a(1), b(2) and c(9-12). The alpha and beta chains form an alternating ring which encloses part of the gamma chain. CF(1) is attached to CF(0) by a central stalk formed by the gamma and epsilon chains, while a peripheral stalk is formed by the delta and b chains.

Its subcellular location is the cell inner membrane. It carries out the reaction ATP + H2O + 4 H(+)(in) = ADP + phosphate + 5 H(+)(out). Functionally, produces ATP from ADP in the presence of a proton gradient across the membrane. The alpha chain is a regulatory subunit. The polypeptide is ATP synthase subunit alpha (Haemophilus influenzae (strain ATCC 51907 / DSM 11121 / KW20 / Rd)).